Here is a 620-residue protein sequence, read N- to C-terminus: Glutathione-regulated potassium-efflux system protein KefC (620 aa).

The next 12 membrane-spanning stretches (helical) occupy residues 4–24 (HTLI…PIAV), 26–46 (LGLG…PWGL), 54–74 (SILH…GLEL), 90–110 (GALQ…LLGL), 114–134 (VAEL…MQAM), 149–169 (FAVL…IPLL), 178–198 (MGAF…VVLL), 218–238 (VFSA…EEVG), 270–290 (GLLL…GTLL), 294–314 (LRIV…LWLI), 327–347 (WFAV…GAAQ), and 359–379 (SLTL…VILN). The 120-residue stretch at 399 to 518 (QPRVIIAGFG…AGVEKPERET (120 aa)) folds into the RCK N-terminal domain. The disordered stretch occupies residues 597-620 (GWQGTEEGKHTGNMADEPETKPSS).

Belongs to the monovalent cation:proton antiporter 2 (CPA2) transporter (TC 2.A.37) family. KefC subfamily. Homodimer. Interacts with the regulatory subunit KefF.

It is found in the cell inner membrane. In terms of biological role, pore-forming subunit of a potassium efflux system that confers protection against electrophiles. Catalyzes K(+)/H(+) antiport. The polypeptide is Glutathione-regulated potassium-efflux system protein KefC (Escherichia coli O8 (strain IAI1)).